A 107-amino-acid chain; its full sequence is Iron-binding protein IscA (107 aa).

Positions 35, 99, and 101 each coordinate Fe cation.

This sequence belongs to the HesB/IscA family. As to quaternary structure, homodimer; may form tetramers and higher multimers. Fe cation is required as a cofactor.

Is able to transfer iron-sulfur clusters to apo-ferredoxin. Multiple cycles of [2Fe2S] cluster formation and transfer are observed, suggesting that IscA acts catalytically. Recruits intracellular free iron so as to provide iron for the assembly of transient iron-sulfur cluster in IscU in the presence of IscS, L-cysteine and the thioredoxin reductase system TrxA/TrxB. The polypeptide is Iron-binding protein IscA (Salmonella agona (strain SL483)).